The sequence spans 213 residues: Adenylate kinase (213 aa).

G14–T19 provides a ligand contact to ATP. Positions S34–V63 are NMP. AMP-binding positions include S35, R40, L61–V63, G89–R92, and Q96. The interval S129–D162 is LID. R130 is a binding site for ATP. 2 residues coordinate Zn(2+): C133 and C136. V139–Y140 is a binding site for ATP. C149 and C152 together coordinate Zn(2+). AMP-binding residues include R159 and R170. Position 198 (A198) interacts with ATP.

It belongs to the adenylate kinase family. In terms of assembly, monomer.

The protein localises to the cytoplasm. It carries out the reaction AMP + ATP = 2 ADP. The protein operates within purine metabolism; AMP biosynthesis via salvage pathway; AMP from ADP: step 1/1. Catalyzes the reversible transfer of the terminal phosphate group between ATP and AMP. Plays an important role in cellular energy homeostasis and in adenine nucleotide metabolism. This chain is Adenylate kinase, found in Chlamydia abortus (strain DSM 27085 / S26/3) (Chlamydophila abortus).